The sequence spans 504 residues: uncharacterized protein (504 aa).

The tract at residues glycine 431 to glutamate 483 is disordered.

The protein belongs to the CBF/MAK21 family.

This is an uncharacterized protein from Caenorhabditis elegans.